Reading from the N-terminus, the 502-residue chain is Cytochrome P450 monooxygenase pyr9 (502 aa).

The helical transmembrane segment at Glu-5–Ile-25 threads the bilayer. N-linked (GlcNAc...) asparagine glycosylation is found at Asn-205, Asn-291, and Asn-372. Cys-437 serves as a coordination point for heme.

Belongs to the cytochrome P450 family. Heme serves as cofactor.

It localises to the membrane. It participates in secondary metabolite biosynthesis; terpenoid biosynthesis. Cytochrome P450 monooxygenase; part of the gene cluster that mediates the biosynthesis of pyripyropene A, a specific human acyl-coenzyme A:cholesterol acyltransferase 2 inhibitor. The first step of the pathway is the synthesis of nicotinyl-CoA from nicotinic acid by the nicotinic acid-CoA ligase pyr1. Nicotinyl-CoA is then a substrate of polyketide synthase pyr2 to produce 4-hydroxy-6-(3-pyridinyl)-2H-pyran-2-one (HPPO) which is further prenylated by the polyprenyl transferase pyr6 to yield farnesyl-HPPO. The next steps consist of an epoxidation of farnesyl-HPPO to epoxyfarnesyl-HPPO by FAD-dependent monooxygenase pyr5 and a cyclization of the terpenoid portion by the terpene cyclase pyr4 to yield deacetyl-pyripyropene E. The 2 cytochrome P450 monooxygenases pyr3 and pyr9, and the 2 acetyltransferases pyr7 and pyr8 are involved in the conversion of deacetyl-pyripyropene E into pyripyropene A through several cycles of oxidation and acetylation steps. Pyr7 acetylates deacetyl-pyripyropene E to pyripyropene E which is oxidized to 11-deacetyl-pyripyropene O by pyr3, which is in turn acetylated into pyripyropene O by pyr8. Pyripyropene O is then oxidized to deacetyl-pyripyropene A by pyr9. Deacetyl-pyripyropene A is finally acetylated to pyripyropene A by pyr8. This is Cytochrome P450 monooxygenase pyr9 from Aspergillus fumigatus (strain ATCC MYA-4609 / CBS 101355 / FGSC A1100 / Af293) (Neosartorya fumigata).